The sequence spans 56 residues: Small ribosomal subunit protein uS14 (56 aa).

Zn(2+) is bound by residues Cys21, Cys24, Cys39, and Cys42.

The protein belongs to the universal ribosomal protein uS14 family. In terms of assembly, component of the 40S small ribosomal subunit. It depends on Zn(2+) as a cofactor.

The protein resides in the cytoplasm. It is found in the cytosol. The protein localises to the rough endoplasmic reticulum. The protein is Small ribosomal subunit protein uS14 (RpS29) of Lysiphlebus testaceipes (Greenbugs aphid parastoid).